Here is a 310-residue protein sequence, read N- to C-terminus: uncharacterized protein (310 aa).

Positions 1 to 11 (MKVKSILKHSR) are enriched in basic residues. Disordered stretches follow at residues 1–227 (MKVK…SDHA) and 242–310 (AMEE…NENE). Polar residues predominate over residues 12 to 50 (MSSPSLETDSMESGQQQNMVSSTPSIDMNESDCSGTGTP). The segment covering 51–80 (SEERIRRLRWDEENLSKAEQQKSAKMKITE) has biased composition (basic and acidic residues). Residues 91-105 (PDDEVPEINLDETDS) are compositionally biased toward acidic residues. Over residues 110–121 (TAGTLGDTLGTL) the composition is skewed to low complexity. Basic and acidic residues-rich tracts occupy residues 126–150 (VSKD…KKEP) and 182–195 (LPSK…ETKP). Over residues 242 to 253 (AMEEEALSEAEE) the composition is skewed to acidic residues. The segment covering 254–265 (NIPKKKPDFNEL) has biased composition (basic and acidic residues). Position 285 is a phosphoserine (S285). The span at 297-310 (DSGSASDVNMNENE) shows a compositional bias: polar residues.

This is an uncharacterized protein from Schizosaccharomyces pombe (strain 972 / ATCC 24843) (Fission yeast).